A 193-amino-acid chain; its full sequence is Holliday junction branch migration complex subunit RuvA (193 aa).

The interval 1 to 64 (MIGRIAGILL…EDAHLLYGFL (64 aa)) is domain I. The tract at residues 65–139 (TPQERTTFRE…GKLGADLGAL (75 aa)) is domain II. The tract at residues 139-143 (LAGAA) is flexible linker. The interval 144–193 (SQSDHAADILNALVALGYSEKEGLAAIKNVPAGTGVSEGIKLALKALSKV) is domain III.

Belongs to the RuvA family. In terms of assembly, homotetramer. Forms an RuvA(8)-RuvB(12)-Holliday junction (HJ) complex. HJ DNA is sandwiched between 2 RuvA tetramers; dsDNA enters through RuvA and exits via RuvB. An RuvB hexamer assembles on each DNA strand where it exits the tetramer. Each RuvB hexamer is contacted by two RuvA subunits (via domain III) on 2 adjacent RuvB subunits; this complex drives branch migration. In the full resolvosome a probable DNA-RuvA(4)-RuvB(12)-RuvC(2) complex forms which resolves the HJ.

The protein localises to the cytoplasm. In terms of biological role, the RuvA-RuvB-RuvC complex processes Holliday junction (HJ) DNA during genetic recombination and DNA repair, while the RuvA-RuvB complex plays an important role in the rescue of blocked DNA replication forks via replication fork reversal (RFR). RuvA specifically binds to HJ cruciform DNA, conferring on it an open structure. The RuvB hexamer acts as an ATP-dependent pump, pulling dsDNA into and through the RuvAB complex. HJ branch migration allows RuvC to scan DNA until it finds its consensus sequence, where it cleaves and resolves the cruciform DNA. The protein is Holliday junction branch migration complex subunit RuvA of Burkholderia ambifaria (strain ATCC BAA-244 / DSM 16087 / CCUG 44356 / LMG 19182 / AMMD) (Burkholderia cepacia (strain AMMD)).